A 750-amino-acid chain; its full sequence is Photosystem I P700 chlorophyll a apoprotein A1 (750 aa).

The next 8 helical transmembrane spans lie at 72 to 95 (VFSA…FHGA), 158 to 181 (LYST…FHYH), 197 to 221 (LNHH…HVSL), 293 to 311 (TAHH…GHMY), 348 to 371 (WHAQ…HHMY), 387 to 413 (LSIF…IFMV), 435 to 457 (AIIS…LYIH), and 532 to 550 (FLVH…LILL). Residues C574 and C583 each contribute to the [4Fe-4S] cluster site. The next 2 helical transmembrane spans lie at 590–611 (HVFL…HFSW) and 664–686 (LSAY…MFLF). Position 675 (H675) interacts with chlorophyll a'. Positions 683 and 691 each coordinate chlorophyll a. Residue W692 participates in phylloquinone binding. A helical membrane pass occupies residues 724 to 744 (AVGVAHYLLGGIATTWAFFLA).

The protein belongs to the PsaA/PsaB family. In terms of assembly, the PsaA/B heterodimer binds the P700 chlorophyll special pair and subsequent electron acceptors. PSI consists of a core antenna complex that captures photons, and an electron transfer chain that converts photonic excitation into a charge separation. The eukaryotic PSI reaction center is composed of at least 11 subunits. The cofactor is P700 is a chlorophyll a/chlorophyll a' dimer, A0 is one or more chlorophyll a, A1 is one or both phylloquinones and FX is a shared 4Fe-4S iron-sulfur center..

It localises to the plastid. The protein localises to the chloroplast thylakoid membrane. It carries out the reaction reduced [plastocyanin] + hnu + oxidized [2Fe-2S]-[ferredoxin] = oxidized [plastocyanin] + reduced [2Fe-2S]-[ferredoxin]. PsaA and PsaB bind P700, the primary electron donor of photosystem I (PSI), as well as the electron acceptors A0, A1 and FX. PSI is a plastocyanin-ferredoxin oxidoreductase, converting photonic excitation into a charge separation, which transfers an electron from the donor P700 chlorophyll pair to the spectroscopically characterized acceptors A0, A1, FX, FA and FB in turn. Oxidized P700 is reduced on the lumenal side of the thylakoid membrane by plastocyanin. The protein is Photosystem I P700 chlorophyll a apoprotein A1 of Chlorokybus atmophyticus (Soil alga).